Consider the following 441-residue polypeptide: Methylenetetrahydrofolate--tRNA-(uracil-5-)-methyltransferase TrmFO (441 aa).

10–15 contributes to the FAD binding site; that stretch reads GAGLAG.

The protein belongs to the MnmG family. TrmFO subfamily. FAD is required as a cofactor.

Its subcellular location is the cytoplasm. The catalysed reaction is uridine(54) in tRNA + (6R)-5,10-methylene-5,6,7,8-tetrahydrofolate + NADH + H(+) = 5-methyluridine(54) in tRNA + (6S)-5,6,7,8-tetrahydrofolate + NAD(+). The enzyme catalyses uridine(54) in tRNA + (6R)-5,10-methylene-5,6,7,8-tetrahydrofolate + NADPH + H(+) = 5-methyluridine(54) in tRNA + (6S)-5,6,7,8-tetrahydrofolate + NADP(+). Functionally, catalyzes the folate-dependent formation of 5-methyl-uridine at position 54 (M-5-U54) in all tRNAs. The polypeptide is Methylenetetrahydrofolate--tRNA-(uracil-5-)-methyltransferase TrmFO (Desulforamulus reducens (strain ATCC BAA-1160 / DSM 100696 / MI-1) (Desulfotomaculum reducens)).